We begin with the raw amino-acid sequence, 320 residues long: Transaldolase (320 aa).

Residue K135 is the Schiff-base intermediate with substrate of the active site.

The protein belongs to the transaldolase family. Type 1 subfamily. Homodimer.

Its subcellular location is the cytoplasm. The catalysed reaction is D-sedoheptulose 7-phosphate + D-glyceraldehyde 3-phosphate = D-erythrose 4-phosphate + beta-D-fructose 6-phosphate. Its pathway is carbohydrate degradation; pentose phosphate pathway; D-glyceraldehyde 3-phosphate and beta-D-fructose 6-phosphate from D-ribose 5-phosphate and D-xylulose 5-phosphate (non-oxidative stage): step 2/3. In terms of biological role, transaldolase is important for the balance of metabolites in the pentose-phosphate pathway. The polypeptide is Transaldolase (Colwellia psychrerythraea (strain 34H / ATCC BAA-681) (Vibrio psychroerythus)).